We begin with the raw amino-acid sequence, 94 residues long: Probable Fe(2+)-trafficking protein (94 aa).

Belongs to the Fe(2+)-trafficking protein family.

Its function is as follows. Could be a mediator in iron transactions between iron acquisition and iron-requiring processes, such as synthesis and/or repair of Fe-S clusters in biosynthetic enzymes. This chain is Probable Fe(2+)-trafficking protein, found in Haemophilus ducreyi (strain 35000HP / ATCC 700724).